The following is a 312-amino-acid chain: Olfactory receptor 1500 (312 aa).

Residues Met-1–Leu-25 lie on the Extracellular side of the membrane. Residue Asn-5 is glycosylated (N-linked (GlcNAc...) asparagine). A helical transmembrane segment spans residues Leu-26–Val-49. The Cytoplasmic portion of the chain corresponds to Arg-50–Met-57. A helical membrane pass occupies residues Pro-58 to Pro-79. Residues Lys-80–Gln-100 lie on the Extracellular side of the membrane. The cysteines at positions 97 and 189 are disulfide-linked. A helical membrane pass occupies residues Leu-101–Tyr-120. Residues Asp-121–Lys-139 are Cytoplasmic-facing. A helical transmembrane segment spans residues Phe-140–Leu-158. Residues His-159–Glu-196 lie on the Extracellular side of the membrane. The chain crosses the membrane as a helical span at residues Leu-197–Val-219. Topologically, residues Arg-220–Lys-236 are cytoplasmic. The helical transmembrane segment at Val-237–Leu-260 threads the bilayer. Residues Cys-261–Ile-272 lie on the Extracellular side of the membrane. A helical membrane pass occupies residues Ala-273–Leu-292. Residues Arg-293 to Leu-312 are Cytoplasmic-facing.

Belongs to the G-protein coupled receptor 1 family. In terms of tissue distribution, olfactory epithelium.

It localises to the cell membrane. Functionally, odorant receptor. This chain is Olfactory receptor 1500 (Olr1500), found in Rattus norvegicus (Rat).